A 353-amino-acid chain; its full sequence is GTPase Obg (353 aa).

Residues 1-159 (MRFVDEVVIN…RVIRLELKLL (159 aa)) form the Obg domain. Residues 160 to 334 (ADVGLLGMPN…LCTAIMQELT (175 aa)) form the OBG-type G domain. GTP-binding positions include 166–173 (GMPNAGKS), 191–195 (FTTLH), 213–216 (DIPG), 284–287 (NKMD), and 315–317 (SAA). 2 residues coordinate Mg(2+): S173 and T193.

Belongs to the TRAFAC class OBG-HflX-like GTPase superfamily. OBG GTPase family. Monomer. The cofactor is Mg(2+).

It localises to the cytoplasm. Its function is as follows. An essential GTPase which binds GTP, GDP and possibly (p)ppGpp with moderate affinity, with high nucleotide exchange rates and a fairly low GTP hydrolysis rate. Plays a role in control of the cell cycle, stress response, ribosome biogenesis and in those bacteria that undergo differentiation, in morphogenesis control. This chain is GTPase Obg, found in Dichelobacter nodosus (strain VCS1703A).